A 289-amino-acid polypeptide reads, in one-letter code: tRNA acetyltransferase TAN1 (289 aa).

Over residues 1 to 10 (MGEKRNRNGK) the composition is skewed to basic and acidic residues. Disordered stretches follow at residues 1-31 (MGEK…DPGT) and 64-83 (DIKE…LSIE). S72 carries the post-translational modification Phosphoserine. Residues 146–259 (ADPKNMVKRT…KSNIGMCVVD (114 aa)) form the THUMP domain.

It is found in the cytoplasm. The protein resides in the nucleus. Its function is as follows. Probable tRNA acetyltransferase required for the formation of the modified nucleoside N(4)-acetylcytidine in serine and leucine tRNAs. Binds RNA. This is tRNA acetyltransferase TAN1 (TAN1) from Saccharomyces cerevisiae (strain ATCC 204508 / S288c) (Baker's yeast).